The chain runs to 60 residues: Small ribosomal subunit protein eS31 (60 aa).

Positions 27, 30, 45, and 48 each coordinate Zn(2+). A C4-type zinc finger spans residues 27 to 48 (CPRCGPGVFMAEHLNRYACGKC).

It belongs to the eukaryotic ribosomal protein eS31 family. Part of the 30S ribosomal subunit. The cofactor is Zn(2+).

The polypeptide is Small ribosomal subunit protein eS31 (Methanocaldococcus jannaschii (strain ATCC 43067 / DSM 2661 / JAL-1 / JCM 10045 / NBRC 100440) (Methanococcus jannaschii)).